Reading from the N-terminus, the 299-residue chain is MNEFDRVRDYLTDLQDRICAAVEAADGKARFAEDLWKREEGGGGRTRILRDGAVFEQAGIGFSDVSGTRLPPSASAHRPELAGATWRACGVSLVFHPHNPYIPTTHMNVRYFRAERDGEVVAAWFGGGFDLTPFYPFDEDVQHWHRVAQALCEPFGQERYAAHKRWCDEYFFLRHRNETRGVGGLFFDDLGQDFERDFAYQRAVGDGFLDAYIPIVQRRKDTPYGEREREFQLYRRGRYVEFNLVYDRGTLFGLQSGGRAESILMSLPPRVRWEYGFTPEPGSAEARLADYLIPRDWLG.

Ser-92 contributes to the substrate binding site. A divalent metal cation contacts are provided by His-96 and His-106. His-106 functions as the Proton donor in the catalytic mechanism. Residue 108-110 participates in substrate binding; the sequence is NVR. Residues His-145 and His-175 each contribute to the a divalent metal cation site. An important for dimerization region spans residues 239-274; sequence YVEFNLVYDRGTLFGLQSGGRAESILMSLPPRVRWE. 257 to 259 lines the substrate pocket; it reads GGR.

Belongs to the aerobic coproporphyrinogen-III oxidase family. Homodimer. It depends on a divalent metal cation as a cofactor.

The protein resides in the cytoplasm. It catalyses the reaction coproporphyrinogen III + O2 + 2 H(+) = protoporphyrinogen IX + 2 CO2 + 2 H2O. It functions in the pathway porphyrin-containing compound metabolism; protoporphyrin-IX biosynthesis; protoporphyrinogen-IX from coproporphyrinogen-III (O2 route): step 1/1. Functionally, involved in the heme biosynthesis. Catalyzes the aerobic oxidative decarboxylation of propionate groups of rings A and B of coproporphyrinogen-III to yield the vinyl groups in protoporphyrinogen-IX. This chain is Oxygen-dependent coproporphyrinogen-III oxidase, found in Xanthomonas euvesicatoria pv. vesicatoria (strain 85-10) (Xanthomonas campestris pv. vesicatoria).